The sequence spans 218 residues: DNA endonuclease I-CeuI (218 aa).

Positions 65 and 66 each coordinate Mg(2+). Residues 71–75 (ISTKK) form an interaction with DNA region. Mg(2+) is bound at residue Asp-86. Interaction with DNA stretches follow at residues 90–94 (NVTQH), 114–116 (RHK), and 191–199 (KQQGQSNEG).

Belongs to the LAGLIDADG endonuclease family. Homodimer. The cofactor is Mg(2+).

Its subcellular location is the plastid. The protein localises to the chloroplast. Functionally, endonuclease involved in intron homing. Recognizes a degenerate sequence of 17-19 bp to produce a staggered cut 5 bp downstream from the CeLSU.5 intron insertion site. In Chlamydomonas moewusii (Chlamydomonas eugametos), this protein is DNA endonuclease I-CeuI.